Reading from the N-terminus, the 252-residue chain is Carboxy-S-adenosyl-L-methionine synthase (252 aa).

S-adenosyl-L-methionine contacts are provided by residues Tyr45, Gly70–Ser72, Asp95–Asn96, Asp123–Ile124, Asn138, and Arg205.

It belongs to the class I-like SAM-binding methyltransferase superfamily. Cx-SAM synthase family. Homodimer.

It carries out the reaction prephenate + S-adenosyl-L-methionine = carboxy-S-adenosyl-L-methionine + 3-phenylpyruvate + H2O. Its function is as follows. Catalyzes the conversion of S-adenosyl-L-methionine (SAM) to carboxy-S-adenosyl-L-methionine (Cx-SAM). This chain is Carboxy-S-adenosyl-L-methionine synthase, found in Photorhabdus laumondii subsp. laumondii (strain DSM 15139 / CIP 105565 / TT01) (Photorhabdus luminescens subsp. laumondii).